The sequence spans 213 residues: Protein-L-isoaspartate O-methyltransferase (213 aa).

Ser-61 is an active-site residue.

It belongs to the methyltransferase superfamily. L-isoaspartyl/D-aspartyl protein methyltransferase family.

It localises to the cytoplasm. It carries out the reaction [protein]-L-isoaspartate + S-adenosyl-L-methionine = [protein]-L-isoaspartate alpha-methyl ester + S-adenosyl-L-homocysteine. In terms of biological role, catalyzes the methyl esterification of L-isoaspartyl residues in peptides and proteins that result from spontaneous decomposition of normal L-aspartyl and L-asparaginyl residues. It plays a role in the repair and/or degradation of damaged proteins. The polypeptide is Protein-L-isoaspartate O-methyltransferase (Petrotoga mobilis (strain DSM 10674 / SJ95)).